Here is a 509-residue protein sequence, read N- to C-terminus: MFS transporter fsdG (509 aa).

Asparagine 8 and asparagine 26 each carry an N-linked (GlcNAc...) asparagine glycan. 4 helical membrane-spanning segments follow: residues 63-83, 103-123, 139-159, and 162-182; these read FLIHTILVSMLCLAGNLATTM, IALTVSIYLLGFALAPMVTSP, IFFLGFNLACAFSSNIGMFIA, and FLAGCAGSAPMTVGGGTIADF. The N-linked (GlcNAc...) asparagine glycan is linked to asparagine 189. The next 4 membrane-spanning stretches (helical) occupy residues 195-215, 222-242, 298-318, and 341-361; these read LFALGPLLGPVIGPIVGGFVA, WTFRIMSIVIAVLSILSCIFL, LIFLPQVLILSFYTAFVFGLI, and GLSYIGIGFGMVGALFLFNFI. N-linked (GlcNAc...) asparagine glycosylation occurs at asparagine 367. The next 4 helical transmembrane spans lie at 380 to 400, 408 to 428, 442 to 462, and 474 to 494; these read YLPLMTWFSPLLPIGFFWYGW, WVVPILGTFFVGFGSFAIIMP, AASVLAASNMMRYVFAAFLPL, and GWGNSLLGFLCVVLAPVPAIF.

It belongs to the major facilitator superfamily.

The protein localises to the cell membrane. Efflux pump that might be required for efficient secretion of fusaridione A or other secondary metabolies produced by the fusaridione A gene cluster. The chain is MFS transporter fsdG from Fusarium heterosporum.